A 515-amino-acid polypeptide reads, in one-letter code: Transcription termination factor Rho (515 aa).

Residues 146–221 (DVLFTGVLDV…VKIKSINDQD (76 aa)) form the Rho RNA-BD domain. ATP-binding positions include 264–269 (GKGQRA), 276–281 (KAGKTT), and arginine 307.

The protein belongs to the Rho family. As to quaternary structure, homohexamer. The homohexamer assembles into an open ring structure.

In terms of biological role, facilitates transcription termination by a mechanism that involves Rho binding to the nascent RNA, activation of Rho's RNA-dependent ATPase activity, and release of the mRNA from the DNA template. The chain is Transcription termination factor Rho from Borreliella burgdorferi (strain ATCC 35210 / DSM 4680 / CIP 102532 / B31) (Borrelia burgdorferi).